The sequence spans 186 residues: MAEAASISQGIAERYATALFELSKETGALKTLETDIDALKDVLAGSPDLGAMIASPVISRGDQAKAVAAIAGKMGLSPLMTNTLALMSEKRRLFALPQVLSALAGLIAEEKGEVTAEVTAATKLSAAQAKKLAETLKAKVGKTVKLNTTVDESLIGGLIVKLGSTMIDTSVKSKLASLQNAMKEVG.

It belongs to the ATPase delta chain family. F-type ATPases have 2 components, F(1) - the catalytic core - and F(0) - the membrane proton channel. F(1) has five subunits: alpha(3), beta(3), gamma(1), delta(1), epsilon(1). F(0) has three main subunits: a(1), b(2) and c(10-14). The alpha and beta chains form an alternating ring which encloses part of the gamma chain. F(1) is attached to F(0) by a central stalk formed by the gamma and epsilon chains, while a peripheral stalk is formed by the delta and b chains.

The protein resides in the cell inner membrane. In terms of biological role, f(1)F(0) ATP synthase produces ATP from ADP in the presence of a proton or sodium gradient. F-type ATPases consist of two structural domains, F(1) containing the extramembraneous catalytic core and F(0) containing the membrane proton channel, linked together by a central stalk and a peripheral stalk. During catalysis, ATP synthesis in the catalytic domain of F(1) is coupled via a rotary mechanism of the central stalk subunits to proton translocation. Functionally, this protein is part of the stalk that links CF(0) to CF(1). It either transmits conformational changes from CF(0) to CF(1) or is implicated in proton conduction. This is ATP synthase subunit delta from Fuscovulum blasticum (Rhodobacter blasticus).